Reading from the N-terminus, the 443-residue chain is Histidinol dehydrogenase (443 aa).

Tyr133, Gln191, and Asn214 together coordinate NAD(+). Substrate is bound by residues Ser240, Gln262, and His265. The Zn(2+) site is built by Gln262 and His265. Catalysis depends on proton acceptor residues Glu329 and His330. His330, Asp363, Glu417, and His422 together coordinate substrate. Asp363 contributes to the Zn(2+) binding site. Residue His422 participates in Zn(2+) binding.

Belongs to the histidinol dehydrogenase family. Homodimer. It depends on Zn(2+) as a cofactor.

The catalysed reaction is L-histidinol + 2 NAD(+) + H2O = L-histidine + 2 NADH + 3 H(+). Its pathway is amino-acid biosynthesis; L-histidine biosynthesis; L-histidine from 5-phospho-alpha-D-ribose 1-diphosphate: step 9/9. Catalyzes the sequential NAD-dependent oxidations of L-histidinol to L-histidinaldehyde and then to L-histidine. This Blochmanniella pennsylvanica (strain BPEN) protein is Histidinol dehydrogenase.